The following is a 229-amino-acid chain: Peroxiredoxin 1 (229 aa).

The Thioredoxin domain occupies 33–192 (LGPKNKAPDF…AFRTLKAFQF (160 aa)). Cys78 serves as the catalytic Cysteine sulfenic acid (-SOH) intermediate.

Belongs to the peroxiredoxin family. AhpC/Prx1 subfamily. Homodimer; disulfide-linked, upon oxidation.

The enzyme catalyses a hydroperoxide + [thioredoxin]-dithiol = an alcohol + [thioredoxin]-disulfide + H2O. Its function is as follows. Thiol-specific peroxidase that catalyzes the reduction of hydrogen peroxide and organic hydroperoxides to water and alcohols, respectively. Plays a role in cell protection against oxidative stress by detoxifying peroxides and as sensor of hydrogen peroxide-mediated signaling events. The polypeptide is Peroxiredoxin 1 (TSA1) (Brugia malayi (Filarial nematode worm)).